Consider the following 121-residue polypeptide: MQSHFITTASILLVVIVAFCAAAPMIEEPKLEKPTNLEILFAKIVKKQNESKQHRLINFISRAMPGGVDAPIASMAEYETFKSDKSANFLSDGAGHVVFRQYRRARLSDILHNVNRRAGGV.

A helical membrane pass occupies residues 6–26; that stretch reads ITTASILLVVIVAFCAAAPMI.

The protein resides in the membrane. This is an uncharacterized protein from Caenorhabditis elegans.